The sequence spans 206 residues: N-(5'-phosphoribosyl)anthranilate isomerase (206 aa).

The protein belongs to the TrpF family.

It catalyses the reaction N-(5-phospho-beta-D-ribosyl)anthranilate = 1-(2-carboxyphenylamino)-1-deoxy-D-ribulose 5-phosphate. The protein operates within amino-acid biosynthesis; L-tryptophan biosynthesis; L-tryptophan from chorismate: step 3/5. This Pseudomonas syringae pv. syringae (strain B728a) protein is N-(5'-phosphoribosyl)anthranilate isomerase.